The primary structure comprises 213 residues: Orotate phosphoribosyltransferase (213 aa).

Lys-26 contacts 5-phospho-alpha-D-ribose 1-diphosphate. Phe-34 to Phe-35 contributes to the orotate binding site. 5-phospho-alpha-D-ribose 1-diphosphate is bound by residues Tyr-72–Lys-73, Arg-99, Lys-100, Lys-103, His-105, and Asp-124–Ala-132. Thr-128 and Arg-156 together coordinate orotate.

It belongs to the purine/pyrimidine phosphoribosyltransferase family. PyrE subfamily. In terms of assembly, homodimer. Requires Mg(2+) as cofactor.

It carries out the reaction orotidine 5'-phosphate + diphosphate = orotate + 5-phospho-alpha-D-ribose 1-diphosphate. It participates in pyrimidine metabolism; UMP biosynthesis via de novo pathway; UMP from orotate: step 1/2. Its function is as follows. Catalyzes the transfer of a ribosyl phosphate group from 5-phosphoribose 1-diphosphate to orotate, leading to the formation of orotidine monophosphate (OMP). This is Orotate phosphoribosyltransferase from Vibrio atlanticus (strain LGP32) (Vibrio splendidus (strain Mel32)).